The sequence spans 699 residues: Epithelial sodium channel subunit alpha (699 aa).

Positions 1-71 (MLDHTRAPEL…EPRQPTEEEE (71 aa)) are disordered. At 1–110 (MLDHTRAPEL…CSKHNRMKTA (110 aa)) the chain is on the cytoplasmic side. The chain crosses the membrane as a helical span at residues 111–131 (FWAVLWLCTFGMMYWQFALLF). Residues 132–589 (EEYFSYPVSL…SQWSLWFGSS (458 aa)) are Extracellular-facing. 10 cysteine pairs are disulfide-bonded: Cys158–Cys332, Cys256–Cys263, Cys309–Cys316, Cys421–Cys506, Cys443–Cys483, Cys443–Cys502, Cys447–Cys498, Cys456–Cys483, Cys456–Cys506, and Cys458–Cys472. The segment at 200 to 270 (RRRSTRDLRG…SDCFYQTYSS (71 aa)) is gating release of inhibition by proteolysis (GRIP); protease-sensitive region that is responsible for the proteolytic activation of the channel. The disordered stretch occupies residues 211–244 (LPHPLQRLRTPPPPNPARSARSASSSVRDNNPQV). The span at 227-238 (ARSARSASSSVR) shows a compositional bias: low complexity. A helical membrane pass occupies residues 590–610 (VLSVVEMAELIFDLLVITLIM). The Cytoplasmic portion of the chain corresponds to 611–699 (LLHRFRSRYW…SSACAPAMAL (89 aa)). The disordered stretch occupies residues 637 to 699 (ASSFPSRFCP…SSACAPAMAL (63 aa)). Over residues 656 to 667 (PQQGTTPPLALT) the composition is skewed to low complexity. Positions 669 to 673 (PPPAY) match the PY motif; recruits WW domain-containing proteins and is thereby required for ubiquitination and inhibition of the channel by NEDD4 and NEDD4L motif.

This sequence belongs to the amiloride-sensitive sodium channel (TC 1.A.6) family. SCNN1A subfamily. Heterotrimer; containing an alpha/SCNN1A, a beta/SCNN1B and a gamma/SCNN1G subunit. Interacts with WWP1 (via WW domains). Interacts with WWP2 (via WW domains); inhibits the channel. Interacts with BPIFA1; the interaction is indirect via SCNN1B and inhibits the proteolytic processing of SCNN1A and SCNN1G and the activation of ENaC. Interacts with the full-length immature form of PCSK9 (pro-PCSK9). Post-translationally, ubiquitinated. Can be ubiquitinated at multiple sites and undergo monoubiquitination and polyubiquitination. Ubiquitination by NEDD4 or NEDD4L inhibits the ENaC channel through endocytosis, intracellular retention and degradation of its individual subunits. ENaC is activated through the proteolytic maturation of its subunits. Furin cleaves the SCNN1A subunit, which results in a stepwise increase in the open probability of the channel due to the release of an inhibitory tract. BPIFA1, which is recruited by the SCNN1B subunit, prevents the proteolytic activation of ENaC. In terms of processing, N-glycosylated. Expressed in kidney (at protein level). Expressed in lung (at protein level). Expressed in the epididymis (at protein level). In the caput and corpus regions of the epididymis, expressed uniformly on the luminal and basal surfaces of the ducts and in the sperm in the duct lumen. Also expressed in distal colon and, at low levels, in liver.

It is found in the apical cell membrane. Its subcellular location is the cell projection. The protein resides in the cilium. The protein localises to the cytoplasmic granule. It localises to the cytoplasm. It is found in the cytoplasmic vesicle. Its subcellular location is the secretory vesicle. The protein resides in the acrosome. The protein localises to the flagellum. The catalysed reaction is Na(+)(in) = Na(+)(out). Its activity is regulated as follows. Originally identified and characterized by its inhibition by the diuretic drug amiloride. In terms of biological role, this is one of the three pore-forming subunits of the heterotrimeric epithelial sodium channel (ENaC), a critical regulator of sodium balance and fluid homeostasis. ENaC operates in epithelial tissues, where it mediates the electrodiffusion of sodium ions from extracellular fluid through the apical membrane of cells, with water following osmotically. It plays a key role in maintaining sodium homeostasis through electrogenic sodium reabsorption in the kidneys. Additionally, ENaC is essential for airway surface liquid homeostasis, which is crucial for proper mucus clearance. This chain is Epithelial sodium channel subunit alpha, found in Mus musculus (Mouse).